Here is a 314-residue protein sequence, read N- to C-terminus: Olfactory receptor 10A6 (314 aa).

At 1-25 (MERQNQSCVVEFILLGFSNYPELQG) the chain is on the extracellular side. A glycan (N-linked (GlcNAc...) asparagine) is linked at N5. Residues 26–46 (QLFVAFLVIYLVTLIGNAIII) form a helical membrane-spanning segment. At 47-54 (VIVSLDQS) the chain is on the cytoplasmic side. The helical transmembrane segment at 55 to 75 (LHVPMYLFLLNLSVVDLSFSA) threads the bilayer. At 76-99 (VIMPEMLVVLSTEKTTISFGGCFA) the chain is on the extracellular side. A disulfide bond links C97 and C189. The chain crosses the membrane as a helical span at residues 100–120 (QMYFILLFGGAECFLLGAMAY). At 121–139 (DRFAAICHPLNYQMIMNKG) the chain is on the cytoplasmic side. Residues 140–160 (VFMKLIIFSWALGFMLGTVQT) traverse the membrane as a helical segment. Residues 161-197 (SWVSSFPFCGLNEINHISCETPAVLELACADTFLFEI) are Extracellular-facing. A helical membrane pass occupies residues 198-217 (YAFTGTFLIILVPFLLILLS). The Cytoplasmic portion of the chain corresponds to 218 to 237 (YIRVLFAILKMPSTTGRQKA). Residues 238–258 (FSTCAAHLTSVTLFYGTASMT) form a helical membrane-spanning segment. The Extracellular segment spans residues 259–271 (YLQPKSGYSPETK). The helical transmembrane segment at 272–292 (KVMSLSYSLLTPLLNLLIYSL) threads the bilayer. Residues 293–314 (RNSEMKRALMKLWRRRVVLHTI) lie on the Cytoplasmic side of the membrane.

It belongs to the G-protein coupled receptor 1 family.

Its subcellular location is the cell membrane. Its function is as follows. Odorant receptor. This is Olfactory receptor 10A6 (OR10A6) from Homo sapiens (Human).